The primary structure comprises 5801 residues: uncharacterized protein (5801 aa).

7 disordered regions span residues 1114–1136 (DDDNNNSNNNNNNNNNNNNNKKI), 1827–1846 (KDRSSSSSSSYSGGGSSINN), 2040–2109 (NNGE…SPLF), 3351–3392 (EKSN…NNSG), 5134–5168 (DNNNNNNNNNNNNNNNNNNNIDHGDDNNDGESESD), 5478–5573 (ISDP…EDII), and 5600–5638 (HDKDEEQPEKPQQQEIHQQPEKPQQPEKPQELQSTETPG). Composition is skewed to low complexity over residues 1118-1134 (NNSNNNNNNNNNNNNNK), 1831-1846 (SSSSSSYSGGGSSINN), 2048-2096 (QQLQ…QQQQ), 3353-3392 (SNNNNNNNNNDNSGNNSGNEIDGSSNGDNNNNNNNNNNSG), and 5135-5153 (NNNNNNNNNNNNNNNNNNN). The span at 5496–5573 (DNEEEEEDDD…EDEDEDEDII (78 aa)) shows a compositional bias: acidic residues. A compositionally biased stretch (basic and acidic residues) spans 5617–5629 (QQPEKPQQPEKPQ).

This is an uncharacterized protein from Dictyostelium discoideum (Social amoeba).